We begin with the raw amino-acid sequence, 23 residues long: Thymidine phosphorylase (23 aa).

Belongs to the thymidine/pyrimidine-nucleoside phosphorylase family. In terms of assembly, homodimer.

The enzyme catalyses thymidine + phosphate = 2-deoxy-alpha-D-ribose 1-phosphate + thymine. Functionally, the enzymes which catalyze the reversible phosphorolysis of pyrimidine nucleosides are involved in the degradation of these compounds and in their utilization as carbon and energy sources, or in the rescue of pyrimidine bases for nucleotide synthesis. This is Thymidine phosphorylase (deoA) from Lacticaseibacillus rhamnosus (Lactobacillus rhamnosus).